The sequence spans 460 residues: Muscarinic acetylcholine receptor M1 (460 aa).

Residues 1 to 22 are Extracellular-facing; it reads MNTSVPPAVSPNITVLAPGKGP. 2 N-linked (GlcNAc...) asparagine glycosylation sites follow: Asn2 and Asn12. The helical transmembrane segment at 23-48 threads the bilayer; sequence WQVAFIGITTGLLSLATVTGNLLVLI. Residues 49–62 lie on the Cytoplasmic side of the membrane; sequence SFKVNTELKTVNNY. A helical membrane pass occupies residues 63–84; the sequence is FLLSLACADLIIGTFSMNLYTT. Residues 85–95 are Extracellular-facing; that stretch reads YLLMGHWALGT. Residues 96–121 form a helical membrane-spanning segment; that stretch reads LACDLWLALDYVASNASVMNLLLISF. Cys98 and Cys178 are joined by a disulfide. The Cytoplasmic portion of the chain corresponds to 122-142; it reads DRYFSVTRPLSYRAKRTPRRA. The helical transmembrane segment at 143 to 164 threads the bilayer; that stretch reads ALMIGLAWLVSFVLWAPAILFW. Residues 165-185 are Extracellular-facing; the sequence is QYLVGERTVLAGQCYIQFLSQ. A helical transmembrane segment spans residues 186-209; the sequence is PIITFGTAMAAFYLPVTVMCTLYW. At 210-366 the chain is on the cytoplasmic side; that stretch reads RIYRETENRA…LVKEKKAART (157 aa). Disordered stretches follow at residues 225-257, 274-297, and 310-351; these read LQGS…SPPG, WKEE…EEPG, and EAQA…QLAK. A Phosphothreonine modification is found at Thr230. The span at 238–257 shows a compositional bias: low complexity; the sequence is SSSSERSQPGAEGSPESPPG. Residue Ser254 is modified to Phosphoserine. Positions 328–343 are enriched in basic residues; the sequence is RPTKKGRDRGGKGQKP. The chain crosses the membrane as a helical span at residues 367–390; it reads LSAILLAFILTWTPYNIMVLVSTF. Over 391–397 the chain is Extracellular; sequence CKDCVPE. The chain crosses the membrane as a helical span at residues 398-420; the sequence is TLWELGYWLCYVNSTVNPMCYAL. The Cytoplasmic segment spans residues 421-460; sequence CNKAFRDTFRLLLLCRWDKRRWRKIPKRPGSVHRTPSRQC. Ser451 carries the post-translational modification Phosphoserine. Thr455 bears the Phosphothreonine mark. Position 457 is a phosphoserine (Ser457).

Belongs to the G-protein coupled receptor 1 family. Muscarinic acetylcholine receptor subfamily. CHRM1 sub-subfamily. As to quaternary structure, interacts with GPRASP2. Interacts with TMEM147.

It localises to the cell membrane. It is found in the postsynaptic cell membrane. In terms of biological role, the muscarinic acetylcholine receptor mediates various cellular responses, including inhibition of adenylate cyclase, breakdown of phosphoinositides and modulation of potassium channels through the action of G proteins. Primary transducing effect is Pi turnover. The sequence is that of Muscarinic acetylcholine receptor M1 (Chrm1) from Mus musculus (Mouse).